We begin with the raw amino-acid sequence, 332 residues long: Methionine synthase (332 aa).

Zn(2+)-binding residues include His-211, Cys-213, and Cys-296.

It belongs to the archaeal MetE family. Requires Zn(2+) as cofactor.

It functions in the pathway amino-acid biosynthesis; L-methionine biosynthesis via de novo pathway. Functionally, catalyzes the transfer of a methyl group to L-homocysteine resulting in methionine formation. The physiological methyl donor is unknown. The protein is Methionine synthase of Saccharolobus solfataricus (strain ATCC 35092 / DSM 1617 / JCM 11322 / P2) (Sulfolobus solfataricus).